Consider the following 241-residue polypeptide: MSKRSKSLRAADAKIDRDKLYAPLEAVRLAKETSTSKFDGTVEVAFRLGVDPRKADQMVRGTVNLPHGTGKTARVLVFATGDRAEAATAAGADIVGSDELIDEVSKGRLDFDAVVATPDLMGKVGRLGRVLGPRGLMPNPKTGTVTPDVAKAVNDIKGGKIEFRVDKHSNLHFIIGKTSFDDTKLVENYGAALEEILRLKPSAAKGRYIKKAALSTTMGPGIPLDSNRTRNLLVEEDPAAV.

It belongs to the universal ribosomal protein uL1 family. In terms of assembly, part of the 50S ribosomal subunit.

Its function is as follows. Binds directly to 23S rRNA. The L1 stalk is quite mobile in the ribosome, and is involved in E site tRNA release. Functionally, protein L1 is also a translational repressor protein, it controls the translation of the L11 operon by binding to its mRNA. The polypeptide is Large ribosomal subunit protein uL1 (Streptomyces coelicolor (strain ATCC BAA-471 / A3(2) / M145)).